The sequence spans 65 residues: Large ribosomal subunit protein uL29 (65 aa).

This sequence belongs to the universal ribosomal protein uL29 family.

The protein is Large ribosomal subunit protein uL29 of Coxiella burnetii (strain CbuK_Q154) (Coxiella burnetii (strain Q154)).